Reading from the N-terminus, the 142-residue chain is Small heat shock protein IbpB (142 aa).

In terms of domain architecture, sHSP spans Ala-26–Arg-137.

The protein belongs to the small heat shock protein (HSP20) family. In terms of assembly, homodimer. Forms homomultimers of about 100-150 subunits at optimal growth temperatures. Conformation changes to oligomers at high temperatures or high ionic concentrations. The decrease in size of the multimers is accompanied by an increase in chaperone activity.

Its subcellular location is the cytoplasm. Functionally, associates with aggregated proteins, together with IbpA, to stabilize and protect them from irreversible denaturation and extensive proteolysis during heat shock and oxidative stress. Aggregated proteins bound to the IbpAB complex are more efficiently refolded and reactivated by the ATP-dependent chaperone systems ClpB and DnaK/DnaJ/GrpE. Its activity is ATP-independent. The protein is Small heat shock protein IbpB of Escherichia coli O7:K1 (strain IAI39 / ExPEC).